We begin with the raw amino-acid sequence, 202 residues long: Peptide deformylase 2 (202 aa).

Cysteine 123 and histidine 165 together coordinate Fe cation. Glutamate 166 is an active-site residue. Fe cation is bound at residue histidine 169.

The protein belongs to the polypeptide deformylase family. Requires Fe(2+) as cofactor.

The catalysed reaction is N-terminal N-formyl-L-methionyl-[peptide] + H2O = N-terminal L-methionyl-[peptide] + formate. Functionally, removes the formyl group from the N-terminal Met of newly synthesized proteins. Requires at least a dipeptide for an efficient rate of reaction. N-terminal L-methionine is a prerequisite for activity but the enzyme has broad specificity at other positions. This chain is Peptide deformylase 2, found in Vibrio vulnificus (strain YJ016).